The chain runs to 467 residues: ATP synthase subunit beta (467 aa).

Residue 156–163 (GGAGVGKT) participates in ATP binding.

This sequence belongs to the ATPase alpha/beta chains family. In terms of assembly, F-type ATPases have 2 components, CF(1) - the catalytic core - and CF(0) - the membrane proton channel. CF(1) has five subunits: alpha(3), beta(3), gamma(1), delta(1), epsilon(1). CF(0) has three main subunits: a(1), b(2) and c(9-12). The alpha and beta chains form an alternating ring which encloses part of the gamma chain. CF(1) is attached to CF(0) by a central stalk formed by the gamma and epsilon chains, while a peripheral stalk is formed by the delta and b chains.

Its subcellular location is the cell inner membrane. The catalysed reaction is ATP + H2O + 4 H(+)(in) = ADP + phosphate + 5 H(+)(out). Functionally, produces ATP from ADP in the presence of a proton gradient across the membrane. The catalytic sites are hosted primarily by the beta subunits. The sequence is that of ATP synthase subunit beta from Cupriavidus metallidurans (strain ATCC 43123 / DSM 2839 / NBRC 102507 / CH34) (Ralstonia metallidurans).